Consider the following 136-residue polypeptide: Large ribosomal subunit protein uL16 (136 aa).

The protein belongs to the universal ribosomal protein uL16 family. Part of the 50S ribosomal subunit.

Its function is as follows. Binds 23S rRNA and is also seen to make contacts with the A and possibly P site tRNAs. In Shewanella pealeana (strain ATCC 700345 / ANG-SQ1), this protein is Large ribosomal subunit protein uL16.